The primary structure comprises 316 residues: 4-hydroxyphenylacetate decarboxylase activating enzyme (316 aa).

Residues 20–307 (HDGPGCRTTV…QDIFLDNGIA (288 aa)) form the Radical SAM core domain. The [4Fe-4S] cluster site is built by Cys-34, Cys-38, Cys-41, Cys-60, Cys-66, Cys-69, and Cys-105. 40–42 (WCA) contributes to the S-adenosyl-L-methionine binding site. The 4Fe-4S ferredoxin-type domain maps to 84-115 (NKPVIDWNICKDCESFECVNSCYYNAFKLCAK). S-adenosyl-L-methionine-binding positions include Gly-144, 193 to 195 (DIK), and His-267.

The protein belongs to the organic radical-activating enzymes family. In terms of assembly, monomer. Requires [4Fe-4S] cluster as cofactor.

It carries out the reaction glycyl-[protein] + reduced [flavodoxin] + S-adenosyl-L-methionine = glycin-2-yl radical-[protein] + semiquinone [flavodoxin] + 5'-deoxyadenosine + L-methionine + H(+). Its function is as follows. Catalyzes activation of 4-hydroxyphenylacetate decarboxylase under anaerobic conditions by generation of an organic free radical on a glycine residue, via a homolytic cleavage of S-adenosyl-L-methionine (SAM). This Clostridioides difficile (strain CD196) (Peptoclostridium difficile) protein is 4-hydroxyphenylacetate decarboxylase activating enzyme.